The primary structure comprises 773 residues: Carnitine O-palmitoyltransferase 1, liver isoform (773 aa).

Position 2 is an N-acetylalanine (alanine 2). Residues 2–47 lie on the Cytoplasmic side of the membrane; that stretch reads AEAHQAVAFQFTVTPDGIDLRLSHEALRQIYLSGLHSWKKKFIRFK. Residues 48 to 73 traverse the membrane as a helical segment; that stretch reads NGIITGVYPASPSSWLIVVVGVMTTM. The Mitochondrial intermembrane portion of the chain corresponds to 74–102; sequence YAKIDPSLGIIAKINRTLETANCMSSQTK. A helical transmembrane segment spans residues 103–122; that stretch reads NVVSGVLFGTGLWVALIVTM. The Cytoplasmic segment spans residues 123–773; sequence RYSLKVLLSY…LFGLSSNSKK (651 aa). Tyrosine 282 is modified (3'-nitrotyrosine). Histidine 473 (proton acceptor) is an active-site residue. 555-567 is a binding site for CoA; that stretch reads GKGIIKKCRTSPD. Threonine 588 is subject to Phosphothreonine. Tyrosine 589 is modified (3'-nitrotyrosine). (R)-carnitine contacts are provided by tyrosine 589 and threonine 602. Threonine 604 carries the phosphothreonine modification. Residues serine 741 and serine 747 each carry the phosphoserine modification.

It belongs to the carnitine/choline acetyltransferase family. Homohexamer and homotrimer. Identified in a complex that contains at least CPT1A, ACSL1 and VDAC1. Also identified in complexes with ACSL1 and VDAC2 and VDAC3. Interacts with ZDHHC4. In terms of tissue distribution, strong expression in kidney and heart, and lower in liver and skeletal muscle.

Its subcellular location is the mitochondrion outer membrane. The catalysed reaction is (R)-carnitine + hexadecanoyl-CoA = O-hexadecanoyl-(R)-carnitine + CoA. The enzyme catalyses succinyl-CoA + L-lysyl-[protein] = N(6)-succinyl-L-lysyl-[protein] + CoA + H(+). It participates in lipid metabolism; fatty acid beta-oxidation. With respect to regulation, inhibited by malonyl-CoA. Catalyzes the transfer of the acyl group of long-chain fatty acid-CoA conjugates onto carnitine, an essential step for the mitochondrial uptake of long-chain fatty acids and their subsequent beta-oxidation in the mitochondrion. Also possesses a lysine succinyltransferase activity that can regulate enzymatic activity of substrate proteins such as ENO1 and metabolism independent of its classical carnitine O-palmitoyltransferase activity. Plays an important role in hepatic triglyceride metabolism. Also plays a role in inducible regulatory T-cell (iTreg) differentiation once activated by butyryl-CoA that antagonizes malonyl-CoA-mediated CPT1A repression. Sustains the IFN-I response by recruiting ZDHCC4 to palmitoylate MAVS at the mitochondria leading to MAVS stabilization and activation. Promotes ROS-induced oxidative stress in liver injury via modulation of NFE2L2 and NLRP3-mediated signaling pathways. The chain is Carnitine O-palmitoyltransferase 1, liver isoform from Homo sapiens (Human).